The following is a 634-amino-acid chain: Chaperone protein dnaK2 (634 aa).

The residue at position 197 (Thr-197) is a Phosphothreonine; by autocatalysis. Residues 601–623 show a composition bias toward low complexity; that stretch reads GAAAAESGADAGAAGAGDSSSGD. The segment at 601-634 is disordered; that stretch reads GAAAAESGADAGAAGAGDSSSGDDVIDAEFTESK. A compositionally biased stretch (acidic residues) spans 624–634; that stretch reads DVIDAEFTESK.

It belongs to the heat shock protein 70 family.

Its function is as follows. Acts as a chaperone. The sequence is that of Chaperone protein dnaK2 (dnaK2) from Prochlorococcus marinus (strain MIT 9313).